A 98-amino-acid chain; its full sequence is Acylphosphatase (98 aa).

In terms of domain architecture, Acylphosphatase-like spans 12-98 (TYYVRVRGVV…DKRFERFQQH (87 aa)). Residues Arg27 and Asn45 contribute to the active site.

Belongs to the acylphosphatase family.

It catalyses the reaction an acyl phosphate + H2O = a carboxylate + phosphate + H(+). The polypeptide is Acylphosphatase (acyP) (Burkholderia thailandensis (strain ATCC 700388 / DSM 13276 / CCUG 48851 / CIP 106301 / E264)).